The following is a 516-amino-acid chain: Putative glucosylceramidase 2 (516 aa).

An N-terminal signal peptide occupies residues 1 to 23 (MSIAWSCFVLGLFALASLQVALA). Glu-254 acts as the Proton donor in catalysis. Residue Glu-358 is the Nucleophile of the active site.

The protein belongs to the glycosyl hydrolase 30 family.

The catalysed reaction is a beta-D-glucosylceramide + H2O = an N-acyl-sphingoid base + D-glucose. It catalyses the reaction a beta-D-glucosyl-(1&lt;-&gt;1')-N-acylsphing-4-enine + H2O = an N-acylsphing-4-enine + D-glucose. The enzyme catalyses an N-acyl-1-beta-D-glucosyl-15-methylhexadecasphing-4-enine + H2O = an N-acyl-15-methylhexadecasphing-4-enine + D-glucose. It functions in the pathway lipid metabolism; sphingolipid metabolism. Glucosylceramidase that catalyzes the hydrolysis of glucosylceramides into free ceramides and glucose. C.elegans contain specific sphingoid bases, which are unique or different in structure compared to the sphingoid bases found in other animals. Two examples of these distinctive compounds are: 15-methylhexadecasphinganine and 15-methylhexadecasphing-4-enine. This chain is Putative glucosylceramidase 2 (gba-2), found in Caenorhabditis elegans.